Here is a 137-residue protein sequence, read N- to C-terminus: Large ribosomal subunit protein uL16c (137 aa).

Belongs to the universal ribosomal protein uL16 family. Part of the 50S ribosomal subunit.

It localises to the plastid. It is found in the chloroplast. The chain is Large ribosomal subunit protein uL16c from Rhodomonas salina (Cryptomonas salina).